The primary structure comprises 380 residues: 8-amino-7-oxononanoate synthase (380 aa).

Residue Arg-26 coordinates substrate. Residue 104–105 coordinates pyridoxal 5'-phosphate; sequence GY. His-129 lines the substrate pocket. Pyridoxal 5'-phosphate contacts are provided by residues Ser-175, 200 to 203, and 232 to 235; these read DEAH and TLSK. Lys-235 carries the post-translational modification N6-(pyridoxal phosphate)lysine. Thr-345 is a substrate binding site.

It belongs to the class-II pyridoxal-phosphate-dependent aminotransferase family. BioF subfamily. In terms of assembly, homodimer. It depends on pyridoxal 5'-phosphate as a cofactor.

It catalyses the reaction 6-carboxyhexanoyl-[ACP] + L-alanine + H(+) = (8S)-8-amino-7-oxononanoate + holo-[ACP] + CO2. Its pathway is cofactor biosynthesis; biotin biosynthesis. Functionally, catalyzes the decarboxylative condensation of pimeloyl-[acyl-carrier protein] and L-alanine to produce 8-amino-7-oxononanoate (AON), [acyl-carrier protein], and carbon dioxide. The chain is 8-amino-7-oxononanoate synthase from Mycolicibacterium vanbaalenii (strain DSM 7251 / JCM 13017 / BCRC 16820 / KCTC 9966 / NRRL B-24157 / PYR-1) (Mycobacterium vanbaalenii).